The sequence spans 545 residues: T-complex protein 1 subunit gamma (545 aa).

N-acetylmethionine is present on methionine 1. The disordered stretch occupies residues methionine 1–serine 24. Position 11 is a phosphoserine (serine 11). Lysine 15 participates in a covalent cross-link: Glycyl lysine isopeptide (Lys-Gly) (interchain with G-Cter in SUMO2). ADP contacts are provided by glycine 42, glycine 94, threonine 95, threonine 96, serine 97, threonine 162, and lysine 163. Residues glycine 42, glycine 94, threonine 95, and threonine 96 each contribute to the ATP site. Serine 170 is subject to Phosphoserine. At lysine 222 the chain carries N6-acetyllysine. A phosphoserine mark is found at serine 243 and serine 244. Tyrosine 247 is subject to Phosphotyrosine. Glycyl lysine isopeptide (Lys-Gly) (interchain with G-Cter in SUMO2) cross-links involve residues lysine 248 and lysine 249. A Phosphoserine modification is found at serine 252. Cysteine 366 and cysteine 372 are disulfide-bonded. Lysine 381 is covalently cross-linked (Glycyl lysine isopeptide (Lys-Gly) (interchain with G-Cter in SUMO2)). Glycine 411 contributes to the ADP binding site. Glycine 411 contacts ATP. A phosphothreonine mark is found at threonine 430 and threonine 459. Glycine 482, glutamate 483, glutamate 497, and lysine 502 together coordinate ADP. Position 482 (glycine 482) interacts with ATP. ATP is bound at residue glutamate 497. Positions histidine 526–glutamate 545 are disordered.

It belongs to the TCP-1 chaperonin family. Component of the chaperonin-containing T-complex (TRiC), a hexadecamer composed of two identical back-to-back stacked rings enclosing a protein folding chamber. Each ring is made up of eight different subunits: TCP1/CCT1, CCT2, CCT3, CCT4, CCT5, CCT6A/CCT6, CCT7, CCT8. Interacts with PACRG. Interacts with DNAAF4. Interacts with DLEC1.

Its subcellular location is the cytoplasm. The catalysed reaction is ATP + H2O = ADP + phosphate + H(+). Component of the chaperonin-containing T-complex (TRiC), a molecular chaperone complex that assists the folding of actin, tubulin and other proteins upon ATP hydrolysis. The TRiC complex mediates the folding of WRAP53/TCAB1, thereby regulating telomere maintenance. As part of the TRiC complex may play a role in the assembly of BBSome, a complex involved in ciliogenesis regulating transports vesicles to the cilia. The sequence is that of T-complex protein 1 subunit gamma (CCT3) from Macaca fascicularis (Crab-eating macaque).